The following is a 141-amino-acid chain: Large ribosomal subunit protein bL17 (141 aa).

This sequence belongs to the bacterial ribosomal protein bL17 family. As to quaternary structure, part of the 50S ribosomal subunit. Contacts protein L32.

The sequence is that of Large ribosomal subunit protein bL17 from Allorhizobium ampelinum (strain ATCC BAA-846 / DSM 112012 / S4) (Agrobacterium vitis (strain S4)).